The sequence spans 208 residues: Probable molybdenum cofactor guanylyltransferase (208 aa).

GTP-binding positions include 12–14 (IAG), K24, D72, and D101. Residue D101 participates in Mg(2+) binding.

This sequence belongs to the MobA family. Mg(2+) is required as a cofactor.

It localises to the cytoplasm. It catalyses the reaction Mo-molybdopterin + GTP + H(+) = Mo-molybdopterin guanine dinucleotide + diphosphate. In terms of biological role, transfers a GMP moiety from GTP to Mo-molybdopterin (Mo-MPT) cofactor (Moco or molybdenum cofactor) to form Mo-molybdopterin guanine dinucleotide (Mo-MGD) cofactor. This is Probable molybdenum cofactor guanylyltransferase from Chloroflexus aggregans (strain MD-66 / DSM 9485).